Consider the following 224-residue polypeptide: Ribonuclease T (224 aa).

The region spanning 20 to 194 is the Exonuclease domain; that stretch reads VVIDVETAGF…YDTERTAELF (175 aa). Residues Asp23, Glu25, His181, and Asp186 each contribute to the Mg(2+) site. His181 acts as the Proton donor/acceptor in catalysis.

This sequence belongs to the RNase T family. In terms of assembly, homodimer. It depends on Mg(2+) as a cofactor.

Functionally, trims short 3' overhangs of a variety of RNA species, leaving a one or two nucleotide 3' overhang. Responsible for the end-turnover of tRNA: specifically removes the terminal AMP residue from uncharged tRNA (tRNA-C-C-A). Also appears to be involved in tRNA biosynthesis. In Shewanella putrefaciens (strain CN-32 / ATCC BAA-453), this protein is Ribonuclease T.